Consider the following 859-residue polypeptide: Rod cGMP-specific 3',5'-cyclic phosphodiesterase subunit alpha (859 aa).

Glycine 2 is modified (N-acetylglycine). GAF domains are found at residues 73 to 222 and 254 to 431; these read QAEK…NLIM and DIER…GWSV. The PDEase domain maps to 483–816; sequence EEEELAEILQ…KEWKALADEY (334 aa). The active-site Proton donor is histidine 559. Residues histidine 563, histidine 599, aspartate 600, and aspartate 720 each contribute to the a divalent metal cation site. The tract at residues 823 to 859 is disordered; it reads LEEEKQKQQAAKQAASGNQPGGNPLQGAPASKSCCIQ. A Cysteine methyl ester modification is found at cysteine 856. Cysteine 856 carries the S-farnesyl cysteine lipid modification. The propeptide at 857–859 is removed in mature form; that stretch reads CIQ.

Belongs to the cyclic nucleotide phosphodiesterase family. In terms of assembly, oligomer composed of two catalytic chains (alpha and beta), an inhibitory chain (gamma) and the delta chain. A divalent metal cation serves as cofactor.

The protein localises to the cell membrane. It localises to the cell projection. Its subcellular location is the cilium. The protein resides in the photoreceptor outer segment. The enzyme catalyses 3',5'-cyclic GMP + H2O = GMP + H(+). Functionally, rod-specific cGMP phosphodiesterase that catalyzes the hydrolysis of 3',5'-cyclic GMP. This protein participates in processes of transmission and amplification of the visual signal. The polypeptide is Rod cGMP-specific 3',5'-cyclic phosphodiesterase subunit alpha (Mus musculus (Mouse)).